The primary structure comprises 1655 residues: MLKCIPLWRCNRHVESVDKRHCSLQAVPEEIYRYSRSLEELLLDANQLRELPKPFFRLLNLRKLGLSDNEIQRLPPEVANFMQLVELDVSRNDIPEIPESIKFCKALEIADFSGNPLSRLPDGFTQLRSLAHLALNDVSLQALPGDVGNLANLVTLELRENLLKSLPASLSFLVKLEQLDLGGNDLEVLPDTLGALPNLRELWLDRNQLSALPPELGNLRRLVCLDVSENRLEELPAELGGLVLLTDLLLSQNLLRRLPDGIGQLKQLSILKVDQNRLCEVTEAIGDCENLSELILTENLLMALPRSLGKLTKLTNLNVDRNHLEALPPEIGGCVALSVLSLRDNRLAVLPPELAHTTELHVLDVAGNRLQSLPFALTHLNLKALWLAENQAQPMLRFQTEDDARTGEKVLTCYLLPQQPPPSLEDAGQQGSLSETWSDAPPSRVSVIQFLEAPIGDEDAEEAAAEKRGLQRRATPHPSELKVMKRSIEGRRSEACPCQPDSGSPLPAEEEKRLSAESGLSEDSRPSASTVSEAEPEGPSAEAQGGSQQEATTAGGEEDAEEDYQEPTVHFAEDALLPGDDREIEEGQPEAPWTLPGGRQRLIRKDTPHYKKHFKISKLPQPEAVVALLQGMQPDGEGPVAPGGWHNGPHAPWAPRAQKEEEEEEEGSPQEEEEEEEEENRAEEEEASTEEEDKEGAVVSAPSVKGVSFDQANNLLIEPARIEEEELTLTILRQTGGLGISIAGGKGSTPYKGDDEGIFISRVSEEGPAARAGVRVGDKLLEVNGVALQGAEHHEAVEALRGAGTAVQMRVWRERMVEPENAVTITPLRPEDDYSPRERRGGGLRLPLLPPESPGPLRQRHVACLARSERGLGFSIAGGKGSTPYRAGDAGIFVSRIAEGGAAHRAGTLQVGDRVLSINGVDVTEARHDHAVSLLTAASPTIALLLEREAGGPLPPSPLPHSSPPTAAVATTSITTATPGVPGLPSLAPSLLAAALEGPYPVEEIRLPRAGGPLGLSIVGGSDHSSHPFGVQEPGVFISKVLPRGLAARSGLRVGDRILAVNGQDVRDATHQEAVSALLRPCLELSLLVRRDPAPPGLRELCIQKAPGERLGISIRGGARGHAGNPRDPTDEGIFISKVSPTGAAGRDGRLRVGLRLLEVNQQSLLGLTHGEAVQLLRSVGDTLTVLVCDGFEASTDAALEVSPGVIANPFAAGIGHRNSLESISSIDRELSPEGPGKEKELPGQTLHWGPEATEAAGRGLQPLKLDYRALAAVPSAGSVQRVPSGAAGGKMAESPCSPSGQQPPSPPSPDELPANVKQAYRAFAAVPTSHPPEDAPAQPPTPGPAASPEQLSFRERQKYFELEVRVPQAEGPPKRVSLVGADDLRKMQEEEARKLQQKRAQMLREAAEAGAEARLALDGETLGEEEQEDEQPPWASPSPTSRQSPASPPPLGGGAPVRTAKAERRHQERLRVQSPEPPAPERALSPAELRALEAEKRALWRAARMKSLEQDALRAQMVLSRSQEGRGTRGPLERLAEAPSPAPTPSPTPVEDLGPQTSTSPGRLPLSGKKFDYRAFAALPSSRPVYDIQSPDFAEELRSLEPSPSPGPQEEDGEVALVLLGRPSPGAVGPEDVALCSSRRPVRPGRRGLGPVPS.

Positions 1-818 (MLKCIPLWRC…MRVWRERMVE (818 aa)) are sufficient for targeting to adherens junction and to inhibit cell proliferation. Position 37 is a phosphoserine (Ser-37). 16 LRR repeats span residues 37-58 (SLEE…FFRL), 60-81 (NLRK…VANF), 83-104 (QLVE…IKFC), 106-127 (ALEI…FTQL), 129-150 (SLAH…VGNL), 152-174 (NLVT…SFLV), 175-197 (KLEQ…GALP), 198-219 (NLRE…LGNL), 221-243 (RLVC…GGLV), 244-265 (LLTD…IGQL), 267-288 (QLSI…IGDC), 290-312 (NLSE…GKLT), 313-334 (KLTN…IGGC), 336-357 (ALSV…LAHT), 359-381 (ELHV…THLN), and 382-402 (LKAL…QTED). The residue at position 378 (Thr-378) is a Phosphothreonine. Disordered regions lie at residues 417–440 (PQQP…WSDA), 459–606 (DAEE…IRKD), and 628–702 (LLQG…VSAP). Positions 458-474 (EDAEEAAAEKRGLQRRA) form a coiled coil. Thr-475 carries the phosphothreonine modification. Over residues 479 to 494 (SELKVMKRSIEGRRSE) the composition is skewed to basic and acidic residues. Ser-504 is modified (phosphoserine). Over residues 537-555 (EGPSAEAQGGSQQEATTAG) the composition is skewed to low complexity. 2 stretches are compositionally biased toward acidic residues: residues 556–565 (GEEDAEEDYQ) and 660–694 (EEEE…EEDK). The stretch at 656 to 701 (RAQKEEEEEEEGSPQEEEEEEEEENRAEEEEASTEEEDKEGAVVSA) forms a coiled coil. Ser-688 carries the post-translational modification Phosphoserine. Thr-689 bears the Phosphothreonine mark. Residues Ser-708 and Ser-764 each carry the phosphoserine modification. The segment at 717 to 1229 (IEPARIEEEE…SLESISSIDR (513 aa)) is interaction with ARHGEF7. Positions 728–815 (TLTILRQTGG…AVQMRVWRER (88 aa)) constitute a PDZ 1 domain. Residues 728–1194 (TLTILRQTGG…TVLVCDGFEA (467 aa)) form a required for interaction with VIM region. Thr-826 is subject to Phosphothreonine. The interval 827–853 (PLRPEDDYSPRERRGGGLRLPLLPPES) is disordered. Basic and acidic residues predominate over residues 829–841 (RPEDDYSPRERRG). Ser-835, Ser-853, Ser-875, and Ser-939 each carry phosphoserine. 3 PDZ domains span residues 862 to 950 (VACL…EREA), 1004 to 1093 (EIRL…RRDP), and 1100 to 1194 (ELCI…GFEA). Residues 1105 to 1117 (KAPGERLGISIRG) form an interaction with tick-borne encephalitis virus RNA-directed RNA polymerase NS5 region. A phosphoserine mark is found at Ser-1140, Ser-1220, Ser-1223, Ser-1226, Ser-1232, Ser-1276, Ser-1279, Ser-1295, Ser-1298, Ser-1306, and Ser-1309. Over residues 1227–1242 (IDRELSPEGPGKEKEL) the composition is skewed to basic and acidic residues. Residues 1227 to 1246 (IDRELSPEGPGKEKELPGQT) form a disordered region. The tract at residues 1277–1489 (AGSVQRVPSG…APERALSPAE (213 aa)) is disordered. The segment covering 1302–1311 (QQPPSPPSPD) has biased composition (pro residues). Phosphothreonine is present on Thr-1342. Ser-1348 is subject to Phosphoserine. The segment covering 1353–1365 (SFRERQKYFELEV) has biased composition (basic and acidic residues). A Phosphoserine modification is found at Ser-1378. Residues 1379–1419 (LVGADDLRKMQEEEARKLQQKRAQMLREAAEAGAEARLALD) adopt a coiled-coil conformation. The span at 1383-1395 (DDLRKMQEEEARK) shows a compositional bias: basic and acidic residues. The segment covering 1409–1421 (EAGAEARLALDGE) has biased composition (low complexity). Acidic residues predominate over residues 1422-1432 (TLGEEEQEDEQ). Residues Ser-1437, Ser-1445, and Ser-1448 each carry the phosphoserine modification. The segment covering 1461 to 1472 (AKAERRHQERLR) has biased composition (basic and acidic residues). Residues Ser-1475, Ser-1486, and Ser-1508 each carry the phosphoserine modification. The disordered stretch occupies residues 1520–1568 (LSRSQEGRGTRGPLERLAEAPSPAPTPSPTPVEDLGPQTSTSPGRLPLS). Basic and acidic residues predominate over residues 1524-1537 (QEGRGTRGPLERLA). Residue Ser-1541 is modified to Phosphoserine. Residue Thr-1545 is modified to Phosphothreonine. Ser-1547, Ser-1561, and Ser-1591 each carry phosphoserine. The segment at 1622–1655 (GRPSPGAVGPEDVALCSSRRPVRPGRRGLGPVPS) is disordered.

It belongs to the LAP (LRR and PDZ) protein family. As to quaternary structure, interacts with UBE3A. Interacts with PAK1 and PAK2. Interacts (via PDZ domains) with VANGL2. Interacts (via PDZ domains) with LPP and TRIP6; the interaction is direct. Interacts (via PDZ domains) with TJP2. Interacts (via PDZ domains) with APC; may mediate APC targeting to adherens junctions of epithelial cells. Interacts (via PDZ domains) with TSHR; regulates TSHR trafficking and function. Interacts with ARHGEF7 and GIT1; interacts directly with ARHGEF7. Interacts with CTNNB1. Interacts with MAPK12. Interacts (via PDZ domains 1 and 3) with MCC. Interacts with DLG5. Interacts with STK4/MST1 and LATS1 in the presence of DLG5. Interacts (via PDZ domain 3) with CRTAM (via PDZ-binding motif); the interaction promotes CRTAM and SCRIB polarization in a subset of CD4+ T-cells. Interacts with YES1, when YES1 is in a closed conformation; the interaction facilitates YES1 autophosphorylation. Interacts (via PDZ domains) with VIM; the interaction protects SCRIB from proteasomal degradation and facilitates SCRIB localization to intermediate filaments, the interaction is reduced by cell contact inhibition. (Microbial infection) Interacts (via fourth PDZ domain) with tick-borne encephalitis virus RNA-directed RNA polymerase NS5; this interaction targets viral NS5 to the cell membrane periphery and nucleus and prevents STAT1 phosphorylation, and thus, the activation of the JAK-STAT signaling pathway. Interacts with HPV E6. Interacts with influenza A virus protein NS1; the interaction results in the translocation of SCRIB from the cell membrane to perinuclear puncta. In terms of processing, ubiquitinated; targeted for UBE3A-dependent multiubiquitination in the presence of high-risk HPV E6 proteins and degraded. Post-translationally, palmitoylated. Could be depalmitoylated by LYPLA1 and/or LYPLA2. Palmitoylation of SCRIB by ZDHHC7 is required for its localization to cell-cell junctions, function in the establishement of epithelial cell polarity and the regulation of downstream signaling pathways important for epithelial cell differentiation. As to expression, expressed in kidney, skeletal muscles, liver, lung, breast, intestine, placenta and skin mainly in epithelial cells (at protein level).

It localises to the cell membrane. The protein localises to the cell junction. Its subcellular location is the adherens junction. The protein resides in the cell projection. It is found in the lamellipodium. It localises to the cytoplasm. The protein localises to the postsynapse. Its subcellular location is the presynapse. In terms of biological role, scaffold protein involved in different aspects of polarized cell differentiation regulating epithelial and neuronal morphogenesis and T-cell polarization. Via its interaction with CRTAM, required for the late phase polarization of a subset of CD4+ T-cells, which in turn regulates TCR-mediated proliferation and IFNG and IL22 production. Plays a role in cell directional movement, cell orientation, cell sheet organization and Golgi complex polarization at the cell migration front. Promotes epithelial cell layer barrier function via maintaining cell-cell adhesion. Most probably functions in the establishment of apico-basal cell polarity. May function in cell proliferation regulating progression from G1 to S phase and as a positive regulator of apoptosis for instance during acinar morphogenesis of the mammary epithelium. May regulate cell invasion via MAPK-mediated cell migration and adhesion. May play a role in exocytosis and in the targeting of synaptic vesicles to synapses. Functions as an activator of Rac GTPase activity. The chain is Protein scribble homolog from Homo sapiens (Human).